We begin with the raw amino-acid sequence, 308 residues long: D-alanine--D-alanine ligase (308 aa).

Residues 102-302 (KTVAKSAGIP…FGALLSWMVE (201 aa)) form the ATP-grasp domain. Position 128–183 (128–183 (PMEPPYVVKPVAEGSSFGVVIVREGQSHPPQVLGSAEWGYGERVMVERYIPGRELT)) interacts with ATP. Positions 252, 269, and 271 each coordinate Mg(2+).

Belongs to the D-alanine--D-alanine ligase family. Mg(2+) serves as cofactor. The cofactor is Mn(2+).

It is found in the cytoplasm. It carries out the reaction 2 D-alanine + ATP = D-alanyl-D-alanine + ADP + phosphate + H(+). It functions in the pathway cell wall biogenesis; peptidoglycan biosynthesis. Cell wall formation. The polypeptide is D-alanine--D-alanine ligase (Chelativorans sp. (strain BNC1)).